Here is a 144-residue protein sequence, read N- to C-terminus: Large ribosomal subunit protein uL16 (144 aa).

The span at 1–14 (MLTPKRVKHRKQHR) shows a compositional bias: basic residues. A disordered region spans residues 1 to 22 (MLTPKRVKHRKQHRPSLAGKAN).

The protein belongs to the universal ribosomal protein uL16 family. As to quaternary structure, part of the 50S ribosomal subunit.

Functionally, binds 23S rRNA and is also seen to make contacts with the A and possibly P site tRNAs. The protein is Large ribosomal subunit protein uL16 of Syntrophomonas wolfei subsp. wolfei (strain DSM 2245B / Goettingen).